The primary structure comprises 38 residues: L-amino-acid oxidase (38 aa).

The protein belongs to the flavin monoamine oxidase family. FIG1 subfamily. In terms of assembly, homodimer; non-covalently linked. FAD serves as cofactor. Post-translationally, N-glycosylated. Expressed by the venom gland.

The protein localises to the secreted. It catalyses the reaction an L-alpha-amino acid + O2 + H2O = a 2-oxocarboxylate + H2O2 + NH4(+). It carries out the reaction L-leucine + O2 + H2O = 4-methyl-2-oxopentanoate + H2O2 + NH4(+). The catalysed reaction is L-phenylalanine + O2 + H2O = 3-phenylpyruvate + H2O2 + NH4(+). The enzyme catalyses L-tryptophan + O2 + H2O = indole-3-pyruvate + H2O2 + NH4(+). It catalyses the reaction L-methionine + O2 + H2O = 4-methylsulfanyl-2-oxobutanoate + H2O2 + NH4(+). It carries out the reaction L-arginine + O2 + H2O = 5-guanidino-2-oxopentanoate + H2O2 + NH4(+). The catalysed reaction is L-2-aminohexanoate + O2 + H2O = 2-oxohexanoate + H2O2 + NH4(+). The enzyme catalyses L-2-aminopentanoate + O2 + H2O = 2-oxopentanoate + H2O2 + NH4(+). It catalyses the reaction L-tyrosine + O2 + H2O = 3-(4-hydroxyphenyl)pyruvate + H2O2 + NH4(+). Its function is as follows. Catalyzes an oxidative deamination of predominantly hydrophobic and aromatic L-amino acids, thus producing hydrogen peroxide that may contribute to the diverse toxic effects of this enzyme. Is very active against L-Phe and L-Tyr, moderately active against L-Trp, L-Met, L-Leu, L-norleucine (L-2-aminohexanoate), L-Arg and L-norvaline (L-2-aminopentanoate), and slightly active against L-His, L-cystine, and L-Ile. L-Gln, L-Lys, L-Asn, L-ornithine, L-Ala and L-Val are oxidized very slowly. Exhibits diverse biological activities, such as hemorrhage, hemolysis, edema, apoptosis of vascular endothelial cells or tumor cell lines, antibacterial and antiparasitic activities. This protein inhibits both agonist- and shear stress-induced platelet aggregation (SIPA). Effects of snake L-amino oxidases on platelets are controversial, since they either induce aggregation or inhibit agonist-induced aggregation. These different effects are probably due to different experimental conditions. The protein is L-amino-acid oxidase of Naja kaouthia (Monocled cobra).